A 217-amino-acid chain; its full sequence is Salivary glue protein Sgs-3 (217 aa).

The signal sequence occupies residues 1–23; it reads MKLTIATVLASILLIGFANVANC. Over residues 45–130 the composition is skewed to low complexity; the sequence is KSTSTTTTTT…KPTTHSTPKT (86 aa). Residues 45–163 are disordered; that stretch reads KSTSTTTTTT…KHTTPTTTTT (119 aa). Residues 131 to 154 are compositionally biased toward basic residues; sequence KPTKHTTPKTKPTKHTTPKTKPTK.

This chain is Salivary glue protein Sgs-3 (Sgs3), found in Drosophila simulans (Fruit fly).